The sequence spans 117 residues: Large ribosomal subunit protein bL19 (117 aa).

It belongs to the bacterial ribosomal protein bL19 family.

In terms of biological role, this protein is located at the 30S-50S ribosomal subunit interface and may play a role in the structure and function of the aminoacyl-tRNA binding site. The chain is Large ribosomal subunit protein bL19 from Vibrio campbellii (strain ATCC BAA-1116).